Reading from the N-terminus, the 195-residue chain is Protein GrpE (195 aa).

A compositionally biased stretch (basic and acidic residues) spans 1–18 (MDPKEKKTKQEEELKVDD). The segment at 1–41 (MDPKEKKTKQEEELKVDDIQDTVEGQSQNEEATEATEPLTA) is disordered.

This sequence belongs to the GrpE family. Homodimer.

The protein resides in the cytoplasm. Functionally, participates actively in the response to hyperosmotic and heat shock by preventing the aggregation of stress-denatured proteins, in association with DnaK and GrpE. It is the nucleotide exchange factor for DnaK and may function as a thermosensor. Unfolded proteins bind initially to DnaJ; upon interaction with the DnaJ-bound protein, DnaK hydrolyzes its bound ATP, resulting in the formation of a stable complex. GrpE releases ADP from DnaK; ATP binding to DnaK triggers the release of the substrate protein, thus completing the reaction cycle. Several rounds of ATP-dependent interactions between DnaJ, DnaK and GrpE are required for fully efficient folding. This Bacteroides fragilis (strain ATCC 25285 / DSM 2151 / CCUG 4856 / JCM 11019 / LMG 10263 / NCTC 9343 / Onslow / VPI 2553 / EN-2) protein is Protein GrpE.